The primary structure comprises 188 residues: UPF0301 protein azo3459 (188 aa).

It belongs to the UPF0301 (AlgH) family.

This Azoarcus sp. (strain BH72) protein is UPF0301 protein azo3459.